Consider the following 158-residue polypeptide: SUMO-conjugating enzyme UBC9 (158 aa).

The UBC core domain maps to 4-157 (IALSRLAQER…VRAQAKKFSP (154 aa)). The interaction with sumo1 stretch occupies residues 13–18 (RKAWRK). The active-site Glycyl thioester intermediate is the C93.

This sequence belongs to the ubiquitin-conjugating enzyme family. In terms of assembly, forms a tight complex with RANGAP1 and RANBP2.

It localises to the nucleus. It functions in the pathway protein modification; protein sumoylation. In terms of biological role, accepts the ubiquitin-like proteins SUMO1, SUMO2 and SUMO3 from the UBLE1A-UBLE1B E1 complex and catalyzes their covalent attachment to other proteins with the help of an E3 ligase such as RANBP2 or CBX4. Essential for nuclear architecture and chromosome segregation. The sequence is that of SUMO-conjugating enzyme UBC9 (ube2i) from Pagrus major (Red sea bream).